Here is a 275-residue protein sequence, read N- to C-terminus: uncharacterized protein (275 aa).

Residue Asp-45 participates in NADPH binding. Catalysis depends on proton donor residues Tyr-50 and His-111. The NADPH site is built by Ser-139, Gln-162, Leu-191, Lys-196, Ser-232, Ser-233, and Arg-237.

Belongs to the aldo/keto reductase family.

Its subcellular location is the cytoplasm. It is found in the nucleus. This is an uncharacterized protein from Schizosaccharomyces pombe (strain 972 / ATCC 24843) (Fission yeast).